A 474-amino-acid chain; its full sequence is tRNA-2-methylthio-N(6)-dimethylallyladenosine synthase (474 aa).

An MTTase N-terminal domain is found at 3 to 120 (KKLHIKTWGC…LPEMINSVRG (118 aa)). Residues C12, C49, C83, C157, C161, and C164 each contribute to the [4Fe-4S] cluster site. The region spanning 143–375 (RAEGPTAFVS…QERINQQAMA (233 aa)) is the Radical SAM core domain. The TRAM domain maps to 378-441 (RRMLGSTQRI…PNSLRGKVVR (64 aa)).

It belongs to the methylthiotransferase family. MiaB subfamily. Monomer. [4Fe-4S] cluster serves as cofactor.

The protein resides in the cytoplasm. The enzyme catalyses N(6)-dimethylallyladenosine(37) in tRNA + (sulfur carrier)-SH + AH2 + 2 S-adenosyl-L-methionine = 2-methylsulfanyl-N(6)-dimethylallyladenosine(37) in tRNA + (sulfur carrier)-H + 5'-deoxyadenosine + L-methionine + A + S-adenosyl-L-homocysteine + 2 H(+). Catalyzes the methylthiolation of N6-(dimethylallyl)adenosine (i(6)A), leading to the formation of 2-methylthio-N6-(dimethylallyl)adenosine (ms(2)i(6)A) at position 37 in tRNAs that read codons beginning with uridine. The chain is tRNA-2-methylthio-N(6)-dimethylallyladenosine synthase from Salmonella arizonae (strain ATCC BAA-731 / CDC346-86 / RSK2980).